A 98-amino-acid chain; its full sequence is Putative defensin-like protein 233 (98 aa).

Residues Met-1–Ala-28 form the signal peptide. 4 disulfides stabilise this stretch: Cys-35–Cys-96, Cys-45–Cys-70, Cys-53–Cys-86, and Cys-68–Cys-88.

Belongs to the DEFL family. In terms of tissue distribution, expressed at least in stem, root, rosette leaves and flower buds.

The protein localises to the secreted. The protein is Putative defensin-like protein 233 (SCRL22) of Arabidopsis thaliana (Mouse-ear cress).